A 770-amino-acid chain; its full sequence is Protein PAT1 homolog 1 (770 aa).

Residues 1-42 (MFRYESLEDCPLDEDEDAFQGLGEEDEEIDQFNDDTFGSGAV) form a disordered region. The segment at 1 to 84 (MFRYESLEDC…EMDLLGDHEE (84 aa)) is region A; interaction with DDX6/RCK. The segment at 1-397 (MFRYESLEDC…HQSSHQDHLR (397 aa)) is involved in nuclear foci localization. Over residues 7-33 (LEDCPLDEDEDAFQGLGEEDEEIDQFN) the composition is skewed to acidic residues. The segment at 85–388 (NLAERLSKMV…LNGTGDRGGH (304 aa)) is region N; interaction with decapping machinery. The Nuclear export signal motif lies at 86 to 95 (LAERLSKMVI). The disordered stretch occupies residues 155-195 (PQRPLQGPEDDRDLSERALPRRSTSPIIGSPPVRAVPIGTP). Position 177 is a phosphoserine (Ser-177). Thr-178 is modified (phosphothreonine). 2 positions are modified to phosphoserine: Ser-179 and Ser-184. Residue Thr-194 is modified to Phosphothreonine. Asymmetric dimethylarginine occurs at positions 217, 223, and 263. Residues 223-397 (RYPAPYGERI…HQSSHQDHLR (175 aa)) are involved in RNA-binding. Residue Ser-278 is modified to Phosphoserine. At Arg-284 the chain carries Asymmetric dimethylarginine. Disordered regions lie at residues 319-340 (FSAPPPATPPPQQHPPGPGPHL) and 376-396 (HRNLNGTGDRGGHQSSHQDHL). Over residues 321 to 337 (APPPATPPPQQHPPGPG) the composition is skewed to pro residues. The residue at position 385 (Arg-385) is an Omega-N-methylarginine. Positions 385–396 (RGGHQSSHQDHL) are enriched in basic and acidic residues. Positions 389 to 448 (QSSHQDHLRKDPYANLMLQREKDWVSKIQMMQLQSTDPYLDDFYYQNYFEKLEKLSAAEE) are region H. Residues 398 to 770 (KDPYANLMLQ…TKLQLVQGIR (373 aa)) form an involved in nuclear speckle localization region. The interval 449-770 (IQGDGPKKER…TKLQLVQGIR (322 aa)) is region C.

This sequence belongs to the PAT1 family. In terms of assembly, interacts (via region A) with DDX6/RCK. Interacts (via region H and region C) with LSM1 and LSM4. Interacts (via region N) with DCP1A, DCP2, EDC3, EDC4 and XRN1. Interacts with the CCR4-NOT complex. Interacts with the Lsm-containing SMN-Sm protein complex. Interacts with EIF4ENIF1/4E-T.

It localises to the cytoplasm. Its subcellular location is the P-body. The protein localises to the nucleus. The protein resides in the PML body. It is found in the nucleus speckle. In terms of biological role, RNA-binding protein involved in deadenylation-dependent decapping of mRNAs, leading to the degradation of mRNAs. Acts as a scaffold protein that connects deadenylation and decapping machinery. Required for cytoplasmic mRNA processing body (P-body) assembly. The sequence is that of Protein PAT1 homolog 1 (Patl1) from Mus musculus (Mouse).